The sequence spans 439 residues: Mitochondrial distribution and morphology protein 12 (439 aa).

Positions 1-439 (MSIDVNWRSA…VYPSFWTFLI (439 aa)) constitute an SMP-LTD domain. Over residues 70–85 (YEEDDDDHTSDASEEL) the composition is skewed to acidic residues. 3 disordered regions span residues 70–102 (YEED…ELNE), 184–274 (SGWS…PPRM), and 353–386 (GSEQ…RHGG). Basic and acidic residues predominate over residues 197 to 212 (GRSERHAGMKHQRAEP). Over residues 215 to 230 (DTSNSTSRPSTANTLP) the composition is skewed to polar residues. Over residues 231–240 (SHPSSSSKNS) the composition is skewed to low complexity. Residues 247-261 (RNDHPSLHAGEHIED) are compositionally biased toward basic and acidic residues.

It belongs to the MDM12 family. As to quaternary structure, component of the ER-mitochondria encounter structure (ERMES) or MDM complex, composed of mmm1, mdm10, mdm12 and mdm34. A mmm1 homodimer associates with one molecule of mdm12 on each side in a pairwise head-to-tail manner, and the SMP-LTD domains of mmm1 and mdm12 generate a continuous hydrophobic tunnel for phospholipid trafficking.

It localises to the mitochondrion outer membrane. Its subcellular location is the endoplasmic reticulum membrane. Component of the ERMES/MDM complex, which serves as a molecular tether to connect the endoplasmic reticulum (ER) and mitochondria. Components of this complex are involved in the control of mitochondrial shape and protein biogenesis, and function in nonvesicular lipid trafficking between the ER and mitochondria. Mdm12 is required for the interaction of the ER-resident membrane protein mmm1 and the outer mitochondrial membrane-resident beta-barrel protein mdm10. The mdm12-mmm1 subcomplex functions in the major beta-barrel assembly pathway that is responsible for biogenesis of all mitochondrial outer membrane beta-barrel proteins, and acts in a late step after the SAM complex. The mdm10-mdm12-mmm1 subcomplex further acts in the TOM40-specific pathway after the action of the mdm12-mmm1 complex. Essential for establishing and maintaining the structure of mitochondria and maintenance of mtDNA nucleoids. The chain is Mitochondrial distribution and morphology protein 12 from Neosartorya fischeri (strain ATCC 1020 / DSM 3700 / CBS 544.65 / FGSC A1164 / JCM 1740 / NRRL 181 / WB 181) (Aspergillus fischerianus).